The chain runs to 336 residues: uncharacterized protein (336 aa).

The 201-residue stretch at 123–323 (KTLMRDSGVP…YSSLINGILD (201 aa)) folds into the ATP-grasp domain.

The protein belongs to the D-alanine--D-alanine ligase family.

In terms of biological role, could be involved in the biosynthesis of a cell wall component. This is an uncharacterized protein from Sinorhizobium fredii (strain NBRC 101917 / NGR234).